A 737-amino-acid polypeptide reads, in one-letter code: Polyribonucleotide nucleotidyltransferase (737 aa).

2 residues coordinate Mg(2+): Asp489 and Asp495. The KH domain maps to 556–615 (PKIDTIKIDVDKIKIVIGKGGETIDKIIAETGVKIDIDEEGNVSIYSSDQDAINRAKEII). Residues 625–693 (DEVYRAKVVR…EKGRIDASMK (69 aa)) enclose the S1 motif domain. The disordered stretch occupies residues 691–737 (SMKALLPRPPKPEHDEKGEKSERPHRPRHHKDHKPKKEFTETPKDSE). Over residues 700–714 (PKPEHDEKGEKSERP) the composition is skewed to basic and acidic residues. Over residues 715–724 (HRPRHHKDHK) the composition is skewed to basic residues. Basic and acidic residues predominate over residues 725 to 737 (PKKEFTETPKDSE).

Belongs to the polyribonucleotide nucleotidyltransferase family. It depends on Mg(2+) as a cofactor.

It localises to the cytoplasm. It carries out the reaction RNA(n+1) + phosphate = RNA(n) + a ribonucleoside 5'-diphosphate. Involved in mRNA degradation. Catalyzes the phosphorolysis of single-stranded polyribonucleotides processively in the 3'- to 5'-direction. This is Polyribonucleotide nucleotidyltransferase from Streptococcus pneumoniae (strain ATCC 700669 / Spain 23F-1).